The primary structure comprises 601 residues: MGSVSSLISGHSLHSKHCRASQYKLRKSSHLKKLNRYSDGLLRFGFSQDSGRGKSSSKMGKSEDFFYIKVSQKARGSHRPDYTALSSGDMGGQTGVDFDPATPPKLMPFSSQLEMSSDKAAVRPTAFKPVLPRSGAILHSSPESTNHQLHPMPPDKPKEQELKPGLCSGALSDSGRNSMSSLPTHSTTSSYQLDPLVTPVGPTSRFGGSAHNITQGIILQDSNMMSLKALSFSDGGSKLAHPGKVEKGSSCVRSPLSTDECTIQELEQKLLQRETALQKLQRSFDEKEFASGQTFEERPRRTRDELECLEPKSKLKPASQKSQRTQQVLQLQVLQLQQEKRQLRQELESLMKEQDLLETKLRSYEREKTNFAPALEETQWEVCQKSGEISLLKQQLKESQMEVNAKASEILSLKAQLKDTRGKLEGMELKTQDLESALRTKGLELEVCENELQRKKNEAELLREKVNLLEQELLELRAQAALHRDAAPLGPPGIGLTFSEDIPALQRELDRLRAELKEERQGHDQMSSGFQHERLVWKEEKEKVIQYQKQLQQSYLAMYQRNQRLEKALQQLARGDIAGEPFEIDLEGADIPYEDIIATEI.

Residue Gly-2 is the site of N-myristoyl glycine attachment. Residues 135 to 190 (GAILHSSPESTNHQLHPMPPDKPKEQELKPGLCSGALSDSGRNSMSSLPTHSTTSS) are disordered. The span at 153-162 (PPDKPKEQEL) shows a compositional bias: basic and acidic residues. Polar residues predominate over residues 174–190 (SGRNSMSSLPTHSTTSS). A coiled-coil region spans residues 255 to 573 (PLSTDECTIQ…RLEKALQQLA (319 aa)).

The protein belongs to the LZTS family. Binds EEF1G, TLK2 and CDK1. In terms of processing, phosphorylated on serine residues. Hyperphosphorylated by the cAMP-dependent kinase PKA during cell-cycle progression. As to expression, highly expressed in brain, in particular in cortex, the CA2 region of the hippocampus, olfactory bulb, striatum and pons. Not detectable in the other tissues tested.

Its subcellular location is the cytoplasm. It localises to the cell membrane. It is found in the cell projection. The protein localises to the dendritic spine. The protein resides in the postsynaptic density. Its subcellular location is the synapse. In terms of biological role, involved in the regulation of cell growth. May stabilize the active CDC2-cyclin B1 complex and thereby contribute to the regulation of the cell cycle and the prevention of uncontrolled cell proliferation. May act as tumor suppressor. In Rattus norvegicus (Rat), this protein is Leucine zipper putative tumor suppressor 1 (Lzts1).